The following is a 338-amino-acid chain: D-erythrose-4-phosphate dehydrogenase (338 aa).

NAD(+) is bound at residue 11 to 12 (RI). Substrate contacts are provided by residues 153–155 (SCT), Arg199, 212–213 (TK), and Arg235. Residue Cys154 is the Nucleophile of the active site. Asn317 is a binding site for NAD(+).

This sequence belongs to the glyceraldehyde-3-phosphate dehydrogenase family. Epd subfamily. In terms of assembly, homotetramer.

Its subcellular location is the cytoplasm. The enzyme catalyses D-erythrose 4-phosphate + NAD(+) + H2O = 4-phospho-D-erythronate + NADH + 2 H(+). It functions in the pathway cofactor biosynthesis; pyridoxine 5'-phosphate biosynthesis; pyridoxine 5'-phosphate from D-erythrose 4-phosphate: step 1/5. Catalyzes the NAD-dependent conversion of D-erythrose 4-phosphate to 4-phosphoerythronate. The polypeptide is D-erythrose-4-phosphate dehydrogenase (Shewanella piezotolerans (strain WP3 / JCM 13877)).